We begin with the raw amino-acid sequence, 292 residues long: High-affinity heme uptake system protein IsdE (292 aa).

Residues 1-19 form the signal peptide; the sequence is MRIIKYLTILVISVVILTS. Residue Cys20 is the site of N-palmitoyl cysteine attachment. The S-diacylglycerol cysteine moiety is linked to residue Cys20. The region spanning 35-291 is the Fe/B12 periplasmic-binding domain; that stretch reads RIVPTTVALT…QLYDLFYKDK (257 aa). Heme is bound by residues Val41, Ala42, Ser60, Tyr61, Met78, and His229.

This sequence belongs to the bacterial solute-binding protein 8 family. The cofactor is heme b.

It is found in the cell membrane. Its function is as follows. Involved in heme (porphyrin) scavenging. Binds Fe(2+) and Fe(3+) heme but the largest fraction is Fe(2+) heme. Functions as a high-affinity heme binding protein and probably has a role in relaying heme-iron from cell wall-anchored isd proteins receptors to the probable permease IsdF. This is High-affinity heme uptake system protein IsdE (isdE) from Staphylococcus aureus (strain MRSA252).